The sequence spans 101 residues: Small ribosomal subunit protein uS14 (101 aa).

This sequence belongs to the universal ribosomal protein uS14 family. In terms of assembly, part of the 30S ribosomal subunit. Contacts proteins S3 and S10.

Binds 16S rRNA, required for the assembly of 30S particles and may also be responsible for determining the conformation of the 16S rRNA at the A site. The sequence is that of Small ribosomal subunit protein uS14 from Shewanella halifaxensis (strain HAW-EB4).